We begin with the raw amino-acid sequence, 136 residues long: Large ribosomal subunit protein uL16c (136 aa).

Residues 1–20 are disordered; the sequence is MLSPKRTKFRKQHRGRMKGK.

This sequence belongs to the universal ribosomal protein uL16 family. In terms of assembly, part of the 50S ribosomal subunit.

The protein resides in the plastid. Its subcellular location is the chloroplast. This chain is Large ribosomal subunit protein uL16c, found in Brachypodium distachyon (Purple false brome).